The sequence spans 576 residues: Sulfite reductase [NADPH] hemoprotein beta-component (576 aa).

Residues 1-12 show a composition bias toward basic and acidic residues; sequence MNVKTEPDRSRD. The interval 1 to 25 is disordered; sequence MNVKTEPDRSRDVSQPLDKLGPDET. [4Fe-4S] cluster-binding residues include Cys441, Cys447, Cys486, and Cys490. Siroheme is bound at residue Cys490.

It belongs to the nitrite and sulfite reductase 4Fe-4S domain family. As to quaternary structure, alpha(8)-beta(8). The alpha component is a flavoprotein, the beta component is a hemoprotein. Requires siroheme as cofactor. It depends on [4Fe-4S] cluster as a cofactor.

It catalyses the reaction hydrogen sulfide + 3 NADP(+) + 3 H2O = sulfite + 3 NADPH + 4 H(+). The protein operates within sulfur metabolism; hydrogen sulfide biosynthesis; hydrogen sulfide from sulfite (NADPH route): step 1/1. Component of the sulfite reductase complex that catalyzes the 6-electron reduction of sulfite to sulfide. This is one of several activities required for the biosynthesis of L-cysteine from sulfate. This is Sulfite reductase [NADPH] hemoprotein beta-component from Nitrobacter hamburgensis (strain DSM 10229 / NCIMB 13809 / X14).